We begin with the raw amino-acid sequence, 273 residues long: Putative phosphoenolpyruvate synthase regulatory protein (273 aa).

G153 to T160 is a binding site for ADP.

It belongs to the pyruvate, phosphate/water dikinase regulatory protein family. PSRP subfamily.

It carries out the reaction [pyruvate, water dikinase] + ADP = [pyruvate, water dikinase]-phosphate + AMP + H(+). The enzyme catalyses [pyruvate, water dikinase]-phosphate + phosphate + H(+) = [pyruvate, water dikinase] + diphosphate. Bifunctional serine/threonine kinase and phosphorylase involved in the regulation of the phosphoenolpyruvate synthase (PEPS) by catalyzing its phosphorylation/dephosphorylation. In Albidiferax ferrireducens (strain ATCC BAA-621 / DSM 15236 / T118) (Rhodoferax ferrireducens), this protein is Putative phosphoenolpyruvate synthase regulatory protein.